A 363-amino-acid chain; its full sequence is Carbamoyl phosphate synthase small chain (363 aa).

Positions 1–173 (MMKAFLVLDN…SKYIFGTHTG (173 aa)) are CPSase. 3 residues coordinate L-glutamine: serine 46, glycine 225, and glycine 227. The Glutamine amidotransferase type-1 domain maps to 177-363 (KLAVYDYGVK…YDLVEKTKKG (187 aa)). Cysteine 253 functions as the Nucleophile in the catalytic mechanism. The L-glutamine site is built by leucine 254, glutamine 257, asparagine 295, glycine 297, and phenylalanine 298. Catalysis depends on residues histidine 336 and glutamate 338.

The protein belongs to the CarA family. In terms of assembly, composed of two chains; the small (or glutamine) chain promotes the hydrolysis of glutamine to ammonia, which is used by the large (or ammonia) chain to synthesize carbamoyl phosphate. Tetramer of heterodimers (alpha,beta)4.

It carries out the reaction hydrogencarbonate + L-glutamine + 2 ATP + H2O = carbamoyl phosphate + L-glutamate + 2 ADP + phosphate + 2 H(+). The catalysed reaction is L-glutamine + H2O = L-glutamate + NH4(+). It functions in the pathway amino-acid biosynthesis; L-arginine biosynthesis; carbamoyl phosphate from bicarbonate: step 1/1. The protein operates within pyrimidine metabolism; UMP biosynthesis via de novo pathway; (S)-dihydroorotate from bicarbonate: step 1/3. Functionally, small subunit of the glutamine-dependent carbamoyl phosphate synthetase (CPSase). CPSase catalyzes the formation of carbamoyl phosphate from the ammonia moiety of glutamine, carbonate, and phosphate donated by ATP, constituting the first step of 2 biosynthetic pathways, one leading to arginine and/or urea and the other to pyrimidine nucleotides. The small subunit (glutamine amidotransferase) binds and cleaves glutamine to supply the large subunit with the substrate ammonia. In Leptospira interrogans serogroup Icterohaemorrhagiae serovar copenhageni (strain Fiocruz L1-130), this protein is Carbamoyl phosphate synthase small chain.